Consider the following 171-residue polypeptide: N5-carboxyaminoimidazole ribonucleotide mutase (171 aa).

Substrate is bound by residues Ser-10, Asp-13, and Arg-40.

This sequence belongs to the AIR carboxylase family. Class I subfamily.

It catalyses the reaction 5-carboxyamino-1-(5-phospho-D-ribosyl)imidazole + H(+) = 5-amino-1-(5-phospho-D-ribosyl)imidazole-4-carboxylate. The protein operates within purine metabolism; IMP biosynthesis via de novo pathway; 5-amino-1-(5-phospho-D-ribosyl)imidazole-4-carboxylate from 5-amino-1-(5-phospho-D-ribosyl)imidazole (N5-CAIR route): step 2/2. In terms of biological role, catalyzes the conversion of N5-carboxyaminoimidazole ribonucleotide (N5-CAIR) to 4-carboxy-5-aminoimidazole ribonucleotide (CAIR). The chain is N5-carboxyaminoimidazole ribonucleotide mutase from Thermotoga maritima (strain ATCC 43589 / DSM 3109 / JCM 10099 / NBRC 100826 / MSB8).